A 299-amino-acid polypeptide reads, in one-letter code: Apolipoprotein E (299 aa).

The signal sequence occupies residues 1–18 (MKVLCTVLVVTLLAGCRA). Repeat copies occupy residues 74–95 (VLMEDTMKAVKAYKSELEQELV), 96–117 (PMAEDTKARLSKELQAAQARLG), 118–139 (ADMEEVRNRLAQYRNEMQAMLG), 140–161 (QSADELRARLASHLRKLRKRML), 162–183 (RDAEDLQKRLAVYKDGASEGAE), 184–205 (RGVSAIRERLGSLVEQSRVRAA), and 224–245 (GRLEEVRGQAQDRLEEMREQME). An 8 X 22 AA approximate tandem repeats region spans residues 74-245 (VLMEDTMKAV…RLEEMREQME (172 aa)). Met-137 is subject to Methionine sulfoxide. Ser-141 bears the Phosphoserine mark. The segment at 152 to 162 (HLRKLRKRMLR) is LDL and other lipoprotein receptors binding. 156–159 (LRKR) is a binding site for heparin. The segment at 204-273 (AALTGQPLQE…GWFEPMVEDM (70 aa)) is lipid-binding and lipoprotein association. Position 219–226 (219–226 (GKQLRGRL)) interacts with heparin. The segment at 261–273 (RLKGWFEPMVEDM) is specificity for association with VLDL.

The protein belongs to the apolipoprotein A1/A4/E family. Homotetramer. May interact with ABCA1; functionally associated with ABCA1 in the biogenesis of HDLs. May interact with APP/A4 amyloid-beta peptide; the interaction is extremely stable in vitro but its physiological significance is unclear. May interact with MAPT. May interact with MAP2. In the cerebrospinal fluid, interacts with secreted SORL1. Interacts with PMEL; this allows the loading of PMEL luminal fragment on ILVs to induce fibril nucleation. In terms of processing, APOE exists as multiple glycosylated and sialylated glycoforms within cells and in plasma. The extent of glycosylation and sialylation are tissue and context specific. Post-translationally, glycated in plasma VLDL. Phosphorylated by FAM20C in the extracellular medium.

The protein localises to the secreted. The protein resides in the extracellular space. It is found in the extracellular matrix. Its subcellular location is the extracellular vesicle. It localises to the endosome. The protein localises to the multivesicular body. Its function is as follows. APOE is an apolipoprotein, a protein associating with lipid particles, that mainly functions in lipoprotein-mediated lipid transport between organs via the plasma and interstitial fluids. APOE is a core component of plasma lipoproteins and is involved in their production, conversion and clearance. Apolipoproteins are amphipathic molecules that interact both with lipids of the lipoprotein particle core and the aqueous environment of the plasma. As such, APOE associates with chylomicrons, chylomicron remnants, very low density lipoproteins (VLDL) and intermediate density lipoproteins (IDL) but shows a preferential binding to high-density lipoproteins (HDL). It also binds a wide range of cellular receptors including the LDL receptor/LDLR, the LDL receptor-related proteins LRP1, LRP2 and LRP8 and the very low-density lipoprotein receptor/VLDLR that mediate the cellular uptake of the APOE-containing lipoprotein particles. Finally, APOE also has a heparin-binding activity and binds heparan-sulfate proteoglycans on the surface of cells, a property that supports the capture and the receptor-mediated uptake of APOE-containing lipoproteins by cells. A main function of APOE is to mediate lipoprotein clearance through the uptake of chylomicrons, VLDLs, and HDLs by hepatocytes. APOE is also involved in the biosynthesis by the liver of VLDLs as well as their uptake by peripheral tissues ensuring the delivery of triglycerides and energy storage in muscle, heart and adipose tissues. By participating in the lipoprotein-mediated distribution of lipids among tissues, APOE plays a critical role in plasma and tissues lipid homeostasis. APOE is also involved in two steps of reverse cholesterol transport, the HDLs-mediated transport of cholesterol from peripheral tissues to the liver, and thereby plays an important role in cholesterol homeostasis. First, it is functionally associated with ABCA1 in the biogenesis of HDLs in tissues. Second, it is enriched in circulating HDLs and mediates their uptake by hepatocytes. APOE also plays an important role in lipid transport in the central nervous system, regulating neuron survival and sprouting. The polypeptide is Apolipoprotein E (APOE) (Octodon degus (Degu)).